A 681-amino-acid chain; its full sequence is Macrolide export ATP-binding/permease protein MacB (681 aa).

The region spanning 6–244 is the ABC transporter domain; that stretch reads LKLAAVTRRF…FAEVGVGAAA (239 aa). ATP is bound at residue 42–49; sequence GASGSGKS. Residues 246–273 show a composition bias toward low complexity; it reads TETAADTRSAPASGDAPPPANNDTAADP. Residues 246–298 form a disordered region; sequence TETAADTRSAPASGDAPPPANNDTAADPAPAPDASPPAPAVSPKHAGWRGSRS. Pro residues predominate over residues 274–285; sequence APAPDASPPAPA. The next 4 membrane-spanning stretches (helical) occupy residues 306 to 326, 554 to 574, 611 to 631, and 644 to 664; these read CLTM…VAVG, LTLL…IGVM, LVCL…GALF, and AGAI…FGFM.

Belongs to the ABC transporter superfamily. Macrolide exporter (TC 3.A.1.122) family. In terms of assembly, homodimer.

The protein localises to the cell inner membrane. In terms of biological role, non-canonical ABC transporter that contains transmembrane domains (TMD), which form a pore in the inner membrane, and an ATP-binding domain (NBD), which is responsible for energy generation. Confers resistance against macrolides. This is Macrolide export ATP-binding/permease protein MacB from Burkholderia orbicola (strain AU 1054).